A 585-amino-acid chain; its full sequence is MAEIQTAQNPLKELEKILERNNKQKNKKSRNQVRREKKKLLREKTNSGAKLAEKNSDDKDQLTENNDNLYNDKKSNGNFYDTNKTDSVDGMVYTTIVDSVELDPNDPLIEQFKDVFNRFKADGQEKDFEDTDKGQIMYSDDEILSEGEEDALQKQQEEKLSKKKLRKLKRMTVAQLKMLSEKADVVEWWDVSSLDPLFLTHLKAYPNTVPVPRHWNQKRDYLSGQRGIERQLFELPSYIRATGIVQMRNAVHENEADMPLRQKMRERVQPKMGKLDIDYQKLHDAFFRYQTKPVLTGFGECYFEGKELEADVKEKRPGDISEELREALGIAPGAPPPWLFAMQRYGPPPSYPDLKIPGVNCPIPTGAQWGFHPGGWGKPPVDQFNRPLYGDVFGNVKPRIHAGTGSPVSTQHWGELEEFEEEESSEEEESEDVEYPTEEITERETIEEYQSASEPRSQREDLHAEPLTYFNQSNVEVDNVELRKNTQPSSDAANRDLYQVLPEKSTNISGFMGPQHQYDIPTAEDTLPQKRNAHSMLSSTNKGDVALNQSSNWQDELSELVSEQAMKVGAAKRQKTQSKRDKFRL.

Residues 1-74 adopt a coiled-coil conformation; it reads MAEIQTAQNP…NNDNLYNDKK (74 aa). The tract at residues 1-84 is disordered; sequence MAEIQTAQNP…SNGNFYDTNK (84 aa). The span at 12–22 shows a compositional bias: basic and acidic residues; the sequence is KELEKILERNN. Over residues 23–41 the composition is skewed to basic residues; it reads KQKNKKSRNQVRREKKKLL. Basic and acidic residues predominate over residues 51-62; that stretch reads LAEKNSDDKDQL. The residue at position 145 (serine 145) is a Phosphoserine. The segment at 400–460 is disordered; sequence IHAGTGSPVS…SASEPRSQRE (61 aa). Positions 416–439 are enriched in acidic residues; that stretch reads LEEFEEEESSEEEESEDVEYPTEE.

In terms of assembly, belongs to the 40S cdc5-associated complex (or cwf complex), a spliceosome sub-complex reminiscent of a late-stage spliceosome composed of the U2, U5 and U6 snRNAs and at least brr2, cdc5, cwf2/prp3, cwf3/syf1, cwf4/syf3, cwf5/ecm2, spp42/cwf6, cwf7/spf27, cwf8, cwf9, cwf10, cwf11, cwf12, prp45/cwf13, cwf14, cwf15, cwf16, cwf17, cwf18, cwf19, cwf20, cwf21, cwf22, cwf23, cwf24, cwf25, cwf26, cyp7/cwf27, cwf28, cwf29/ist3, lea1, msl1, prp5/cwf1, prp10/sap155, prp12/sap130, prp17, prp22, sap61, sap62, sap114, sap145, slu7, smb1, smd1, smd3, smf1, smg1 and syf2. Sap145 is part of the SF3b subcomplex of the Prp19-associated nineteen complex (NTC), composed of ini1, prp10, prp12/sap130, sap10/sap155, sap14, sap49 and sap145. Part of the U2 snRNP.

The protein resides in the nucleus. The protein localises to the cytoplasm. In terms of biological role, involved in pre-mRNA splicing. May be involved in endoplasmic reticulum-associated protein degradation (ERAD) and required for growth at low and high temperatures. The protein is Pre-mRNA-splicing factor sap145 (sap145) of Schizosaccharomyces pombe (strain 972 / ATCC 24843) (Fission yeast).